We begin with the raw amino-acid sequence, 620 residues long: LysM domain receptor-like kinase 3 (620 aa).

A signal peptide spans 1–23; that stretch reads MNLKNGLLLFILFLDCVFFKVES. Over 24–231 the chain is Extracellular; sequence KCVKGCDVAL…YSRTGIAKGS (208 aa). 3 disulfides stabilise this stretch: C25–C92, C29–C154, and C90–C152. N46 is a glycosylation site (N-linked (GlcNAc...) asparagine). A LysM 1; degenerate domain is found at 46–72; it reads NISNFMQSKIVLTNSFDVIMSYNRDVV. 2 LysM domains span residues 102–148 and 167–210; these read FEYT…KINV and VTYP…VFIP. Chitin-binding positions include 108–114 and 136–142; these read EGDDYDL and DPNHIPV. Residues N147 and N199 are each glycosylated (N-linked (GlcNAc...) asparagine). Residues 232–252 traverse the membrane as a helical segment; the sequence is AVGIAMAGIFGLLLFVIYIYA. The Cytoplasmic segment spans residues 253–620; the sequence is KYFQKKEEEK…QSLINLLSTR (368 aa). Polar residues predominate over residues 265-278; that stretch reads LPQTSRAFSTQDAS. The segment at 265–292 is disordered; that stretch reads LPQTSRAFSTQDASGSAEYETSGSSGHA. Phosphoserine is present on residues S269 and S273. One can recognise a Protein kinase domain in the interval 322 to 595; sequence FSLDNKIGQG…RSIVVALMTL (274 aa). ATP-binding positions include 328–336 and K349; that span reads IGQGGFGAV. D441 serves as the catalytic Proton acceptor.

This sequence belongs to the protein kinase superfamily. Ser/Thr protein kinase family. Forms homodimers and homooligomers. Forms heteromeric complexes with NFP at the cell periphery in nodules. Interacts with PUB1. In terms of processing, autophosphorylated. In terms of tissue distribution, expressed in the epidermal and root hair cells of the developing root hair zone during nonsymbiotic growth. Accumulates in roots and nodules during symbiotic growth with rhizobia. Localized at the cell periphery in a narrow zone of about two cell layers (e.g. L1/L2 zone) at the nodule apex upon infection by rhizobia, from the meristem to the infection zone (at protein level).

It is found in the cell membrane. It localises to the vacuole lumen. The enzyme catalyses L-seryl-[protein] + ATP = O-phospho-L-seryl-[protein] + ADP + H(+). It catalyses the reaction L-threonyl-[protein] + ATP = O-phospho-L-threonyl-[protein] + ADP + H(+). Functionally, putative receptor for S.meliloti Nod factor signals essential for the establishment of the nitrogen-fixing, root nodule symbiosis with S.meliloti. Involved in the control of root hair curling after S.meliloti infection, probably by modulating the reorganization of the microtubular cytoskeleton in epidermal and cortical cells. Regulates a subset of Nod factor-induced genes. In Medicago truncatula (Barrel medic), this protein is LysM domain receptor-like kinase 3.